A 547-amino-acid polypeptide reads, in one-letter code: uncharacterized protein (547 aa).

12 helical membrane passes run 33 to 53 (PTFF…IMVI), 107 to 127 (PLIV…GVIF), 145 to 165 (TGLI…LSFA), 203 to 223 (VYIL…FYLA), 231 to 251 (FIAI…FLLV), 263 to 283 (VAGI…LIYL), 298 to 318 (LNKI…ASFF), 351 to 371 (TLLT…FGLL), 397 to 417 (TVII…VAFG), 432 to 452 (LDLA…VATG), 470 to 490 (IVSL…FQAI), and 499 to 519 (VFIW…IAFG).

Its subcellular location is the cell membrane. This is an uncharacterized protein from Mycoplasma genitalium (strain ATCC 33530 / DSM 19775 / NCTC 10195 / G37) (Mycoplasmoides genitalium).